A 577-amino-acid chain; its full sequence is MYRAAASLASKARQAGNSLATRQVGSRLAWSRNYAAKDIKFGVEARALMLRGVEELADAVKVTMGPKGRNVVIEQSFGAPKVTKDGVTVAKSIEFKDRVKNVGASLVKQVANATNDTAGDGTTCATVLTKAIFTEGCKSVAAGMNAMDLRRGISMAVDAVVTNLKGMARMISTSEEIAQVGTISANGEREIGELIAKAMEKVGKEGVITIADGNTLYNELEVVEGMKLDRGYISPYFITNSKTQKCELEDPLILIHDKKVTNMHAVVKVLEMALKKQKPLLIVAEDVESEALGTLIINKLRAGIKVCAVKAPGFGENRKANLQDLAILTGGEVITEELGMNLENFEPHMLGTCKKVTVSKDDTVILDGAGDKKSIEERAEQIRSAIENSTSDYDKEKLQERLAKLSGGVAVLKIGGASEAEVGEKKDRVTDALNATKAAVEEGIVPGGGVALLYASKELDKLQTANFDQKIGVQIIQNALKTPVHTIASNAGVEGAVVVGKLLEQENTDLGYDAAKGEYVDMVKTGIIDPLKVIRTALVDAASVSSLMTTTESIIVEIPKEEAPAPAMGGGMGGMDY.

A mitochondrion-targeting transit peptide spans 1–34 (MYRAAASLASKARQAGNSLATRQVGSRLAWSRNY).

It belongs to the chaperonin (HSP60) family.

Its subcellular location is the mitochondrion. In terms of biological role, implicated in mitochondrial protein import and macromolecular assembly. May facilitate the correct folding of imported proteins. May also prevent misfolding and promote the refolding and proper assembly of unfolded polypeptides generated under stress conditions in the mitochondrial matrix. In Zea mays (Maize), this protein is Chaperonin CPN60-1, mitochondrial (CPN60I).